A 562-amino-acid polypeptide reads, in one-letter code: Probable malate:quinone oxidoreductase (562 aa).

The tract at residues 530–562 (EVPDKSATPPDPTIAPKHQHSPTHNANSEMQAL) is disordered. The segment covering 551-562 (PTHNANSEMQAL) has biased composition (polar residues).

It belongs to the MQO family. FAD is required as a cofactor.

The catalysed reaction is (S)-malate + a quinone = a quinol + oxaloacetate. It functions in the pathway carbohydrate metabolism; tricarboxylic acid cycle; oxaloacetate from (S)-malate (quinone route): step 1/1. The polypeptide is Probable malate:quinone oxidoreductase (Xylella fastidiosa (strain 9a5c)).